A 403-amino-acid polypeptide reads, in one-letter code: 1-deoxy-D-xylulose 5-phosphate reductoisomerase (403 aa).

NADPH is bound by residues T18, G19, S20, I21, Q46, and N132. K133 lines the 1-deoxy-D-xylulose 5-phosphate pocket. Residue E134 coordinates NADPH. A Mn(2+)-binding site is contributed by D158. Residues S159, E160, S189, and H212 each contribute to the 1-deoxy-D-xylulose 5-phosphate site. E160 serves as a coordination point for Mn(2+). Residue G218 participates in NADPH binding. Residues S225, N230, K231, and E234 each contribute to the 1-deoxy-D-xylulose 5-phosphate site. Mn(2+) is bound at residue E234.

The protein belongs to the DXR family. The cofactor is Mg(2+). Mn(2+) serves as cofactor.

The catalysed reaction is 2-C-methyl-D-erythritol 4-phosphate + NADP(+) = 1-deoxy-D-xylulose 5-phosphate + NADPH + H(+). The protein operates within isoprenoid biosynthesis; isopentenyl diphosphate biosynthesis via DXP pathway; isopentenyl diphosphate from 1-deoxy-D-xylulose 5-phosphate: step 1/6. Functionally, catalyzes the NADPH-dependent rearrangement and reduction of 1-deoxy-D-xylulose-5-phosphate (DXP) to 2-C-methyl-D-erythritol 4-phosphate (MEP). The sequence is that of 1-deoxy-D-xylulose 5-phosphate reductoisomerase from Aromatoleum aromaticum (strain DSM 19018 / LMG 30748 / EbN1) (Azoarcus sp. (strain EbN1)).